A 280-amino-acid polypeptide reads, in one-letter code: Divalent cation/proton antiporter GDT1 (280 aa).

At 1-3 the chain is on the cytoplasmic side; that stretch reads MGN. The helical transmembrane segment at 4–24 threads the bilayer; it reads MIKKASLIALLPLFTAAAAAA. The Vacuolar segment spans residues 25 to 45; it reads TDAETSMESGSSSHLKSFLMS. A helical membrane pass occupies residues 46–66; it reads VSMIGLSEIGDKTFLIAALMA. Residues 67–71 lie on the Cytoplasmic side of the membrane; it reads MRHKR. The helical transmembrane segment at 72-92 threads the bilayer; the sequence is VLVFSAAATSLAIMTILSGVV. The Vacuolar segment spans residues 93–104; the sequence is GHSAVAFLSERY. A helical transmembrane segment spans residues 105 to 125; it reads TAFFAGILFLVFGYKLTMEGL. Residues 126–183 lie on the Cytoplasmic side of the membrane; it reads EMSKDAGVEEEMAEVEEEIAIKDMNQDMDDVEKGGDTAYDKQLKNASIGKKIVHRIRE. A helical membrane pass occupies residues 184–204; the sequence is LASFMFSPVWVQIFLMVFLGE. At 205-222 the chain is on the vacuolar side; that stretch reads LGDRSQISIIAMATDSDY. The helical transmembrane segment at 223 to 243 threads the bilayer; that stretch reads WYVIAGAVIGHAICSGLAVVG. The Cytoplasmic portion of the chain corresponds to 244–255; the sequence is GKLLATRISIRT. A helical transmembrane segment spans residues 256-276; it reads ITLASSLLFFIFALMYIYQAF. Residues 277–280 are Vacuolar-facing; it reads TTQD.

This sequence belongs to the GDT1 family.

The protein resides in the golgi apparatus. The protein localises to the cis-Golgi network membrane. It catalyses the reaction Ca(2+)(in) + n H(+)(out) = Ca(2+)(out) + n H(+)(in). The enzyme catalyses Mn(2+)(in) + n H(+)(out) = Mn(2+)(out) + n H(+)(in). Its function is as follows. Divalent cation:proton antiporter that exchanges calcium or manganese ions for protons across the Golgi membrane. Mediates the reversible transport of calcium or manganese to the Golgi lumen driven by the proton gradient and possibly the membrane potential generated by V-ATPase. Provides calcium or manganese cofactors to resident Golgi enzymes and contributes to the maintenance of an acidic luminal Golgi pH required for proper functioning of the secretory pathway. The transport stoichiometry remains to be elucidated. This Saccharomyces cerevisiae (strain ATCC 204508 / S288c) (Baker's yeast) protein is Divalent cation/proton antiporter GDT1.